The sequence spans 190 residues: dTTP/UTP pyrophosphatase (190 aa).

Asp-71 (proton acceptor) is an active-site residue.

Belongs to the Maf family. YhdE subfamily. A divalent metal cation serves as cofactor.

It is found in the cytoplasm. It catalyses the reaction dTTP + H2O = dTMP + diphosphate + H(+). It carries out the reaction UTP + H2O = UMP + diphosphate + H(+). In terms of biological role, nucleoside triphosphate pyrophosphatase that hydrolyzes dTTP and UTP. May have a dual role in cell division arrest and in preventing the incorporation of modified nucleotides into cellular nucleic acids. The chain is dTTP/UTP pyrophosphatase from Xanthomonas campestris pv. campestris (strain ATCC 33913 / DSM 3586 / NCPPB 528 / LMG 568 / P 25).